Consider the following 1407-residue polypeptide: DNA-directed RNA polymerase subunit beta' (1407 aa).

Zn(2+) is bound by residues Cys70, Cys72, Cys85, and Cys88. Residues Asp460, Asp462, and Asp464 each contribute to the Mg(2+) site. Residues Cys814, Cys888, Cys895, and Cys898 each contribute to the Zn(2+) site.

Belongs to the RNA polymerase beta' chain family. The RNAP catalytic core consists of 2 alpha, 1 beta, 1 beta' and 1 omega subunit. When a sigma factor is associated with the core the holoenzyme is formed, which can initiate transcription. Requires Mg(2+) as cofactor. Zn(2+) is required as a cofactor.

The enzyme catalyses RNA(n) + a ribonucleoside 5'-triphosphate = RNA(n+1) + diphosphate. Its function is as follows. DNA-dependent RNA polymerase catalyzes the transcription of DNA into RNA using the four ribonucleoside triphosphates as substrates. This Salmonella paratyphi B (strain ATCC BAA-1250 / SPB7) protein is DNA-directed RNA polymerase subunit beta'.